A 402-amino-acid chain; its full sequence is Zinc finger CCCH domain-containing protein 35 (402 aa).

2 consecutive C3H1-type zinc fingers follow at residues 117–144 (CYSG…HGVF) and 152–176 (RYRT…HTPD). Disordered regions lie at residues 180-211 (VLPP…AESY) and 232-258 (SSPT…DAAG). Positions 183-192 (PSQQQGSNSP) are enriched in polar residues. Residues 232 to 241 (SSPTSTLVSP) show a composition bias toward low complexity. A compositionally biased stretch (pro residues) spans 242 to 253 (PRSPPSESPPLS).

In Oryza sativa subsp. japonica (Rice), this protein is Zinc finger CCCH domain-containing protein 35.